The sequence spans 409 residues: Peptidase T (409 aa).

Residue H78 coordinates Zn(2+). D80 is an active-site residue. D140 contacts Zn(2+). The Proton acceptor role is filled by E173. Positions 174, 196, and 379 each coordinate Zn(2+).

Belongs to the peptidase M20B family. It depends on Zn(2+) as a cofactor.

The protein resides in the cytoplasm. The catalysed reaction is Release of the N-terminal residue from a tripeptide.. Its function is as follows. Cleaves the N-terminal amino acid of tripeptides. The sequence is that of Peptidase T from Salmonella dublin (strain CT_02021853).